A 230-amino-acid chain; its full sequence is Large ribosomal subunit protein uL1 (230 aa).

The protein belongs to the universal ribosomal protein uL1 family. In terms of assembly, part of the 50S ribosomal subunit.

In terms of biological role, binds directly to 23S rRNA. The L1 stalk is quite mobile in the ribosome, and is involved in E site tRNA release. Functionally, protein L1 is also a translational repressor protein, it controls the translation of the L11 operon by binding to its mRNA. This Lactobacillus johnsonii (strain CNCM I-12250 / La1 / NCC 533) protein is Large ribosomal subunit protein uL1.